The primary structure comprises 412 residues: Translation initiation factor 2 subunit gamma (412 aa).

In terms of domain architecture, tr-type G spans 8-205 (QAEMNIGMVG…AMYEHFEPPE (198 aa)). The segment at 17–24 (GHVDHGKT) is G1. Aspartate 20, threonine 24, glycine 45, and serine 47 together coordinate Mg(2+). Position 20–25 (20–25 (DHGKTT)) interacts with GTP. The segment at 45–49 (GISIR) is G2. The Zn(2+) site is built by cysteine 60, cysteine 63, cysteine 72, and cysteine 75. The tract at residues 89-92 (DSPG) is G3. Residues 145–148 (NKID) and 183–185 (SAQ) contribute to the GTP site. Positions 145–148 (NKID) are G4. A G5 region spans residues 183–185 (SAQ).

The protein belongs to the TRAFAC class translation factor GTPase superfamily. Classic translation factor GTPase family. EIF2G subfamily. As to quaternary structure, heterotrimer composed of an alpha, a beta and a gamma chain. The cofactor is Mg(2+).

It catalyses the reaction GTP + H2O = GDP + phosphate + H(+). Functionally, eIF-2 functions in the early steps of protein synthesis by forming a ternary complex with GTP and initiator tRNA. The chain is Translation initiation factor 2 subunit gamma from Methanopyrus kandleri (strain AV19 / DSM 6324 / JCM 9639 / NBRC 100938).